The following is a 270-amino-acid chain: Allergen Asp f 7 (270 aa).

The N-terminal stretch at 1 to 21 is a signal peptide; it reads MAPIFKSLALVSALFAAISSA. Disordered stretches follow at residues 53–97 and 113–167; these read YPTP…QPTQ and ADSA…GPCS. The segment covering 63–81 has biased composition (low complexity); it reads VVESTPTPTPSAAPEQAEP. The segment covering 83–97 has biased composition (polar residues); that stretch reads ETSTQPETTKSQPTQ. Residues 127 to 149 are compositionally biased toward low complexity; the sequence is PATTAAPSTSTTTQAAPSAPPAA. The span at 150-162 shows a compositional bias: polar residues; that stretch reads NSGSTEKAASSGY.

The protein is Allergen Asp f 7 of Aspergillus fumigatus (strain ATCC MYA-4609 / CBS 101355 / FGSC A1100 / Af293) (Neosartorya fumigata).